Here is a 475-residue protein sequence, read N- to C-terminus: Methyltransferase-like protein 25B (475 aa).

Positions 185–210 (NKRLVARAQRLDQELLQALDKMEKRH) form a coiled coil. Residues 406–426 (VVAFFSLALLLAPLVETLILL) form a helical membrane-spanning segment.

Belongs to the METTL25 family.

It is found in the membrane. In Rattus norvegicus (Rat), this protein is Methyltransferase-like protein 25B.